Consider the following 317-residue polypeptide: Olfactory receptor 2F1 (317 aa).

The Extracellular segment spans residues 1–24 (MGTDNQTWVSEFILLGLSSDWDTR). Asparagine 5 carries N-linked (GlcNAc...) asparagine glycosylation. A helical membrane pass occupies residues 25 to 48 (VSLFVLFLVMYVVTVLGNCLIVLL). Over 49 to 57 (IRLDSRLHT) the chain is Cytoplasmic. A helical membrane pass occupies residues 58-79 (PMYFFLTNLSLVDVSYATSVVP). Over 80 to 100 (QLLAHFLAEHKAIPFQSCAAQ) the chain is Extracellular. A disulfide bridge connects residues cysteine 97 and cysteine 189. Residues 101–120 (LFFSLALGGIEFVLLAVMAY) form a helical membrane-spanning segment. The Cytoplasmic portion of the chain corresponds to 121–139 (DRYVAVCDALRYSAIMHGG). A helical transmembrane segment spans residues 140 to 160 (LCARLAITSWVSGFISSPVQT). Topologically, residues 161 to 200 (AITFQLPMCRNKFIDHISCELLAVVRLACVDTSSNEVTIM) are extracellular. Residues 201–222 (VSSIVLLMTPFCLVLLSYIQII) traverse the membrane as a helical segment. Residues 223–236 (STILKIQSREGRKK) are Cytoplasmic-facing. Residues 237–261 (AFHTCASHLTVVALCYGVAIFTYIQ) traverse the membrane as a helical segment. Topologically, residues 262–272 (PHSSPSVLQEK) are extracellular. Residues 273–292 (LFSVFYAILTPMLNPMIYSL) traverse the membrane as a helical segment. Residues 293 to 317 (RNKEVKGAWQKLLWKFSGLTSKLAT) lie on the Cytoplasmic side of the membrane.

This sequence belongs to the G-protein coupled receptor 1 family.

It is found in the cell membrane. Its function is as follows. Odorant receptor. The chain is Olfactory receptor 2F1 (OR2F1) from Homo sapiens (Human).